The primary structure comprises 692 residues: Ribonuclease R (692 aa).

Residues 204-525 enclose the RNB domain; the sequence is RKDLRDLLCF…IVHRLLFHPL (322 aa). The 86-residue stretch at 563 to 648 folds into the S1 motif domain; the sequence is KKFLDEQPAT…LTQAIEWTLI (86 aa). Residues 651 to 692 form a disordered region; the sequence is KERSSSKKKKAKAKSNATQVKKKSSSKKKKAVSKAKKNRGGK. Residues 670 to 692 show a composition bias toward basic residues; the sequence is VKKKSSSKKKKAVSKAKKNRGGK.

The protein belongs to the RNR ribonuclease family. RNase R subfamily.

Its subcellular location is the cytoplasm. It carries out the reaction Exonucleolytic cleavage in the 3'- to 5'-direction to yield nucleoside 5'-phosphates.. Functionally, 3'-5' exoribonuclease that releases 5'-nucleoside monophosphates and is involved in maturation of structured RNAs. The sequence is that of Ribonuclease R from Chlamydia muridarum (strain MoPn / Nigg).